Here is a 745-residue protein sequence, read N- to C-terminus: DNA ligase (745 aa).

The disordered stretch occupies residues 1–27 (MRNHGPGSERKDACVSAPDPTFSDDVP). Residues 57–61 (DAEYD), 106–107 (SL), and Glu135 each bind NAD(+). The active-site N6-AMP-lysine intermediate is Lys137. Residues Arg158 and Glu197 each contribute to the NAD(+) site. A disordered region spans residues 216–235 (GKPPFANPRNAAAGSLRQKD). Residues Lys313 and Lys337 each coordinate NAD(+). Zn(2+)-binding residues include Cys431, Cys434, Cys450, and Cys456. The 90-residue stretch at 649–738 (DGPRLLDGIT…PEAARAARLS (90 aa)) folds into the BRCT domain.

The protein belongs to the NAD-dependent DNA ligase family. LigA subfamily. Requires Mg(2+) as cofactor. It depends on Mn(2+) as a cofactor.

The enzyme catalyses NAD(+) + (deoxyribonucleotide)n-3'-hydroxyl + 5'-phospho-(deoxyribonucleotide)m = (deoxyribonucleotide)n+m + AMP + beta-nicotinamide D-nucleotide.. Functionally, DNA ligase that catalyzes the formation of phosphodiester linkages between 5'-phosphoryl and 3'-hydroxyl groups in double-stranded DNA using NAD as a coenzyme and as the energy source for the reaction. It is essential for DNA replication and repair of damaged DNA. In Thermobifida fusca (strain YX), this protein is DNA ligase.